The following is a 548-amino-acid chain: Folylpolyglutamate synthase (548 aa).

An ATP-binding site is contributed by 130 to 133 (GKGS). The Mg(2+) site is built by Ser157, Glu234, and His262. ATP-binding residues include Arg382 and Asp396.

It belongs to the folylpolyglutamate synthase family. A monovalent cation serves as cofactor.

The protein resides in the mitochondrion inner membrane. Its subcellular location is the mitochondrion matrix. It localises to the cytoplasm. It carries out the reaction (6S)-5,6,7,8-tetrahydrofolyl-(gamma-L-Glu)(n) + L-glutamate + ATP = (6S)-5,6,7,8-tetrahydrofolyl-(gamma-L-Glu)(n+1) + ADP + phosphate + H(+). It functions in the pathway cofactor biosynthesis; tetrahydrofolylpolyglutamate biosynthesis. In terms of biological role, catalyzes conversion of folates to polyglutamate derivatives allowing concentration of folate compounds in the cell and the intracellular retention of these cofactors, which are important substrates for most of the folate-dependent enzymes that are involved in one-carbon transfer reactions involved in purine, pyrimidine and amino acid synthesis. Required for methionine synthesis and maintenance of intact mitochondrial DNA. Involved in telomere maintenance. In Saccharomyces cerevisiae (strain RM11-1a) (Baker's yeast), this protein is Folylpolyglutamate synthase.